The sequence spans 321 residues: 4-dihydromethyl-trisporate dehydrogenase (321 aa).

The active-site Proton donor is tyrosine 51. Histidine 113 serves as a coordination point for substrate.

This sequence belongs to the aldo/keto reductase family.

The protein operates within pheromone biosynthesis; trisporate biosynthesis. In terms of biological role, catalyzes the NADP-dependent oxidation of (+) mating-type specific precursor 4-dihydromethyl-trisporate to methyl-trisporate. This chain is 4-dihydromethyl-trisporate dehydrogenase (tdh), found in Mucor mucedo (Common pinmould).